The following is a 675-amino-acid chain: DNA ligase (675 aa).

NAD(+) contacts are provided by residues 33-37, 82-83, and Glu-115; these read DAEYD and SL. The active-site N6-AMP-lysine intermediate is the Lys-117. 4 residues coordinate NAD(+): Arg-138, Glu-175, Lys-293, and Lys-317. Residues Cys-411, Cys-414, Cys-429, and Cys-435 each coordinate Zn(2+). Residues 594–675 form the BRCT domain; it reads IADNPLKDKT…LIGYFTTIVS (82 aa).

This sequence belongs to the NAD-dependent DNA ligase family. LigA subfamily. Mg(2+) is required as a cofactor. Requires Mn(2+) as cofactor.

The enzyme catalyses NAD(+) + (deoxyribonucleotide)n-3'-hydroxyl + 5'-phospho-(deoxyribonucleotide)m = (deoxyribonucleotide)n+m + AMP + beta-nicotinamide D-nucleotide.. DNA ligase that catalyzes the formation of phosphodiester linkages between 5'-phosphoryl and 3'-hydroxyl groups in double-stranded DNA using NAD as a coenzyme and as the energy source for the reaction. It is essential for DNA replication and repair of damaged DNA. The protein is DNA ligase of Glaesserella parasuis serovar 5 (strain SH0165) (Haemophilus parasuis).